A 604-amino-acid chain; its full sequence is Prostaglandin G/H synthase 2 (604 aa).

Positions 1–17 (MLARALLLCAVLALSHT) are cleaved as a signal peptide. The EGF-like domain occupies 18–55 (ANPCCSHPCQNRGVCMSVGFDQYKCDCTRTGFYGENCS). 4 cysteine pairs are disulfide-bonded: Cys21/Cys32, Cys22/Cys145, Cys26/Cys42, and Cys44/Cys54. The N-linked (GlcNAc...) asparagine glycan is linked to Asn53. Arg106 is a substrate binding site. An N-linked (GlcNAc...) asparagine glycan is attached at Asn130. Residue His193 is the Proton acceptor of the active site. Position 341 (Tyr341) interacts with substrate. Tyr371 acts as the For cyclooxygenase activity in catalysis. Residue His374 coordinates heme b. Asn396 carries an N-linked (GlcNAc...) asparagine glycan. Cys526 bears the S-nitrosocysteine mark. Cys555 and Cys561 are disulfide-bonded. Residue Ser565 is modified to O-acetylserine. Asn580 carries an N-linked (GlcNAc...) asparagine glycan.

The protein belongs to the prostaglandin G/H synthase family. In terms of assembly, homodimer. Heme b is required as a cofactor. Post-translationally, S-nitrosylation by NOS2 (iNOS) activates enzyme activity. S-nitrosylation may take place on different Cys residues in addition to Cys-526. In terms of processing, acetylated at Ser-565 by SPHK1. During neuroinflammation, acetylation by SPHK1 promotes neuronal secretion of specialized preresolving mediators (SPMs), especially 15-R-lipoxin A4, which results in an increase of phagocytic microglia.

The protein resides in the microsome membrane. It localises to the endoplasmic reticulum membrane. The protein localises to the nucleus inner membrane. Its subcellular location is the nucleus outer membrane. It catalyses the reaction (5Z,8Z,11Z,14Z)-eicosatetraenoate + AH2 + 2 O2 = prostaglandin H2 + A + H2O. It carries out the reaction (5Z,8Z,11Z,14Z)-eicosatetraenoate + 2 O2 = prostaglandin G2. The enzyme catalyses prostaglandin G2 + AH2 = prostaglandin H2 + A + H2O. The catalysed reaction is (5Z,8Z,11Z,14Z,17Z)-eicosapentaenoate + 2 O2 = prostaglandin G3. It catalyses the reaction prostaglandin G3 + AH2 = prostaglandin H3 + A + H2O. It carries out the reaction (8Z,11Z,14Z)-eicosatrienoate + 2 O2 = prostaglandin G1. The enzyme catalyses prostaglandin G1 + AH2 = prostaglandin H1 + A + H2O. The catalysed reaction is 2-(5Z,8Z,11Z,14Z)-eicosatetraenoyl-sn-glycero-3-phosphoethanolamine + 2 O2 = 2-(prostaglandin G2)-sn-glycero-3-phosphoethanolamine. It catalyses the reaction 2-(prostaglandin G2)-sn-glycero-3-phosphoethanolamine + AH2 = 2-(prostaglandin H2)-sn-glycero-3-phosphoethanolamine + A + H2O. It carries out the reaction 2-(5Z,8Z,11Z,14Z)-eicosatetraenoyl-sn-glycero-3-phosphocholine + 2 O2 = 2-(prostaglandin G2)-sn-glycero-3-phosphocholine. The enzyme catalyses 2-(prostaglandin G2)-sn-glycero-3-phosphocholine + AH2 = 2-(prostaglandin H2)-sn-glycero-3-phosphocholine + A + H2O. The catalysed reaction is (15S)-hydroperoxy-(5Z,8Z,11Z,13E)-eicosatetraenoate + AH2 = (15S)-hydroxy-(5Z,8Z,11Z,13E)-eicosatetraenoate + A + H2O. It catalyses the reaction 2-(5Z,8Z,11Z,14Z)-eicosatetraenoyl-sn-glycero-3-phosphocholine + AH2 + O2 = 2-[(15S)-hydroxy-(5Z,8Z,11Z,13E)-eicosatetraenoyl]-sn-glycero-3-phosphocholine + A + H2O. It carries out the reaction 2-(5Z,8Z,11Z,14Z)-eicosatetraenoyl-sn-glycero-3-phosphocholine + AH2 + O2 = 2-[(15R)-hydroxy-(5Z,8Z,11Z,13E)-eicosatetraenoyl]-sn-glycero-3-phosphocholine + A + H2O. The enzyme catalyses 2-(5Z,8Z,11Z,14Z)-eicosatetraenoyl-sn-glycero-3-phosphocholine + AH2 + O2 = 2-[(11R)-hydroxy-(5Z,8Z,12E,14Z)-eicosatetraenoyl]-sn-glycero-3-phosphocholine + A + H2O. The catalysed reaction is (9Z,12Z)-octadecadienoate + AH2 + O2 = 9-hydroxy-(10E,12Z)-octadecadienoate + A + H2O. It catalyses the reaction (9Z,12Z)-octadecadienoate + AH2 + O2 = 13-hydroxy-(9Z,11E)-octadecadienoate + A + H2O. It carries out the reaction (5Z,8Z,11Z,14Z)-eicosatetraenoate + AH2 + O2 = (15R)-hydroxy-(5Z,8Z,11Z,13E)-eicosatetraenoate + A + H2O. The enzyme catalyses (5Z,8Z,11Z,14Z)-eicosatetraenoate + AH2 + O2 = (11R)-hydroxy-(5Z,8Z,12E,14Z)-eicosatetraenoate + A + H2O. The catalysed reaction is (5Z,8Z,11Z,14Z,17Z)-eicosapentaenoate + AH2 + O2 = (11R)-hydroxy-(5Z,8Z,12E,14Z,17Z)-eicosapentaenoate + A + H2O. It catalyses the reaction (5Z,8Z,11Z,14Z,17Z)-eicosapentaenoate + AH2 + O2 = (18S)-hydroxy-(5Z,8Z,11Z,14Z,16E)-eicosapentaenoate + A + H2O. It carries out the reaction (5Z,8Z,11Z,14Z,17Z)-eicosapentaenoate + AH2 + O2 = (18R)-hydroxy-(5Z,8Z,11Z,14Z,16E)-eicosapentaenoate + A + H2O. The enzyme catalyses (5Z,8Z,11Z,14Z,17Z)-eicosapentaenoate + AH2 + O2 = (15R)-hydroxy-(5Z,8Z,11Z,13E,17Z)-eicosapentaenoate + A + H2O. The catalysed reaction is (5Z,8Z,11Z,14Z,17Z)-eicosapentaenoate + AH2 + O2 = (15S)-hydroxy-(5Z,8Z,11Z,13E,17Z)-eicosapentaenoate + A + H2O. It catalyses the reaction (7Z,10Z,13Z,16Z,19Z)-docosapentaenoate + AH2 + O2 = 13R-hydroxy-(7Z,10Z,14E,16Z,19Z)-docosapentaenoate + A + H2O. It carries out the reaction (4Z,7Z,10Z,13Z,16Z,19Z)-docosahexaenoate + AH2 + O2 = 13-hydroxy-(4Z,7Z,10Z,14E,16Z,19Z)-docosahexaenoate + A + H2O. The enzyme catalyses (5S)-hydroxy-(6E,8Z,11Z,14Z)-eicosatetraenoate + AH2 + O2 = (5S,15R)-dihydroxy-(6E,8Z,11Z,13E)-eicosatetraenoate + A + H2O. The catalysed reaction is (4Z,7Z,10Z,13Z,16Z,19Z)-docosahexaenoate + AH2 + O2 = 17R-hydroxy-(4Z,7Z,10Z,13Z,15E,19Z)-docosahexaenoate + A + H2O. It catalyses the reaction (5S)-hydroxy-(6E,8Z,11Z,14Z)-eicosatetraenoate + AH2 + O2 = (5S,15S)-dihydroxy-(6E,8Z,11Z,13E)-eicosatetraenoate + A + H2O. It carries out the reaction (5S)-hydroxy-(6E,8Z,11Z,14Z)-eicosatetraenoate + AH2 + O2 = (5S,11R)-dihydroxy-(6E,8Z,12E,14Z)-eicosatetraenoate + A + H2O. The enzyme catalyses 2-(5Z,8Z,11Z,14Z-eicosatetraenoyl)-glycerol + 2 O2 = 2-glyceryl-prostaglandin G2. The catalysed reaction is 2-glyceryl-prostaglandin G2 + AH2 = 2-glyceryl-prostaglandin H2 + A + H2O. It catalyses the reaction (5Z,8Z,11Z,14Z)-eicosatetraenoate + O2 = (15R)-hydroperoxy-(5Z,8Z,11Z,13E)-eicosatetraenoate. It carries out the reaction (5Z,8Z,11Z,14Z)-eicosatetraenoate + O2 = 11R-hydroperoxy-(5Z,8Z,12E,14Z)-eicosatetraenoate. The enzyme catalyses (9Z,12Z)-octadecadienoate + AH2 + O2 = (9R)-hydroxy-(10E,12Z)-octadecadienoate + A + H2O. The catalysed reaction is (9Z,12Z)-octadecadienoate + AH2 + O2 = (9S)-hydroxy-(10E,12Z)-octadecadienoate + A + H2O. It catalyses the reaction (9Z,12Z)-octadecadienoate + AH2 + O2 = (13S)-hydroxy-(9Z,11E)-octadecadienoate + A + H2O. It carries out the reaction (9Z,12Z)-octadecadienoate + AH2 + O2 = (13R)-hydroxy-(9Z,11E)-octadecadienoate + A + H2O. It functions in the pathway lipid metabolism; prostaglandin biosynthesis. With respect to regulation, the cyclooxygenase activity is inhibited by nonsteroidal anti-inflammatory drugs (NSAIDs) including aspirin, ibuprofen, flurbiprofen, celecoxib, flufenamic, mefenamic and tolfenamic acids as well as by hydroperoxide scavenger erythrocyte glutathione peroxidase GPX1. Aspirin triggers enzyme acetylation turning off its ability to generate pro-inflammatory prostaglandins, but switches on its capacity to produce anti-inflammatory lipid mediators involved in inflammation resolution. Aspirin enhances lipoxygenase-type activity toward production of epimers with R stereochemistry such as 15R-HETE, 18R-HEPE, 15R-HEPE and 17R-HDHA. Atorvastatin, a cholesterol-lowering drug, triggers enzyme S-nitrosylation increasing production of 13-series resolvins (RvTs). In terms of biological role, dual cyclooxygenase and peroxidase in the biosynthesis pathway of prostanoids, a class of C20 oxylipins mainly derived from arachidonate ((5Z,8Z,11Z,14Z)-eicosatetraenoate, AA, C20:4(n-6)), with a particular role in the inflammatory response. The cyclooxygenase activity oxygenates AA to the hydroperoxy endoperoxide prostaglandin G2 (PGG2), and the peroxidase activity reduces PGG2 to the hydroxy endoperoxide prostaglandin H2 (PGH2), the precursor of all 2-series prostaglandins and thromboxanes. This complex transformation is initiated by abstraction of hydrogen at carbon 13 (with S-stereochemistry), followed by insertion of molecular O2 to form the endoperoxide bridge between carbon 9 and 11 that defines prostaglandins. The insertion of a second molecule of O2 (bis-oxygenase activity) yields a hydroperoxy group in PGG2 that is then reduced to PGH2 by two electrons. Similarly catalyzes successive cyclooxygenation and peroxidation of dihomo-gamma-linoleate (DGLA, C20:3(n-6)) and eicosapentaenoate (EPA, C20:5(n-3)) to corresponding PGH1 and PGH3, the precursors of 1- and 3-series prostaglandins. In an alternative pathway of prostanoid biosynthesis, converts 2-arachidonoyl lysophopholipids to prostanoid lysophopholipids, which are then hydrolyzed by intracellular phospholipases to release free prostanoids. Metabolizes 2-arachidonoyl glycerol yielding the glyceryl ester of PGH2, a process that can contribute to pain response. Generates lipid mediators from n-3 and n-6 polyunsaturated fatty acids (PUFAs) via a lipoxygenase-type mechanism. Oxygenates PUFAs to hydroperoxy compounds and then reduces them to corresponding alcohols. Plays a role in the generation of resolution phase interaction products (resolvins) during both sterile and infectious inflammation. Metabolizes docosahexaenoate (DHA, C22:6(n-3)) to 17R-HDHA, a precursor of the D-series resolvins (RvDs). As a component of the biosynthetic pathway of E-series resolvins (RvEs), converts eicosapentaenoate (EPA, C20:5(n-3)) primarily to 18S-HEPE that is further metabolized by ALOX5 and LTA4H to generate 18S-RvE1 and 18S-RvE2. In vascular endothelial cells, converts docosapentaenoate (DPA, C22:5(n-3)) to 13R-HDPA, a precursor for 13-series resolvins (RvTs) shown to activate macrophage phagocytosis during bacterial infection. In activated leukocytes, contributes to oxygenation of hydroxyeicosatetraenoates (HETE) to diHETES (5,15-diHETE and 5,11-diHETE). Can also use linoleate (LA, (9Z,12Z)-octadecadienoate, C18:2(n-6)) as substrate and produce hydroxyoctadecadienoates (HODEs) in a regio- and stereospecific manner, being (9R)-HODE ((9R)-hydroxy-(10E,12Z)-octadecadienoate) and (13S)-HODE ((13S)-hydroxy-(9Z,11E)-octadecadienoate) its major products. During neuroinflammation, plays a role in neuronal secretion of specialized preresolving mediators (SPMs) 15R-lipoxin A4 that regulates phagocytic microglia. The protein is Prostaglandin G/H synthase 2 of Homo sapiens (Human).